Reading from the N-terminus, the 136-residue chain is uncharacterized protein (136 aa).

It localises to the mitochondrion. This is an uncharacterized protein from Arabidopsis thaliana (Mouse-ear cress).